The chain runs to 147 residues: Cytochrome c' (147 aa).

The N-terminal stretch at 1-21 (MKRMMIVAALAALTTTTVAQA) is a signal peptide. Positions 31, 87, 88, 137, 140, and 141 each coordinate heme c.

In terms of assembly, homodimer. Binds 1 heme c group covalently per subunit.

Its function is as follows. Cytochrome c' is the most widely occurring bacterial c-type cytochrome. Cytochromes c' are high-spin proteins and the heme has no sixth ligand. Their exact function is not known. The polypeptide is Cytochrome c' (Rhodospirillum rubrum (strain ATCC 11170 / ATH 1.1.1 / DSM 467 / LMG 4362 / NCIMB 8255 / S1)).